Consider the following 60-residue polypeptide: Large ribosomal subunit protein bL32 (60 aa).

Basic residues predominate over residues 1–20 (MACPKKKTSKSKRSMRRAAW). The interval 1–22 (MACPKKKTSKSKRSMRRAAWKR) is disordered.

Belongs to the bacterial ribosomal protein bL32 family.

The protein is Large ribosomal subunit protein bL32 of Thermosynechococcus vestitus (strain NIES-2133 / IAM M-273 / BP-1).